The sequence spans 278 residues: 2-succinyl-6-hydroxy-2,4-cyclohexadiene-1-carboxylate synthase (278 aa).

This sequence belongs to the AB hydrolase superfamily. MenH family. Monomer.

It catalyses the reaction 5-enolpyruvoyl-6-hydroxy-2-succinyl-cyclohex-3-ene-1-carboxylate = (1R,6R)-6-hydroxy-2-succinyl-cyclohexa-2,4-diene-1-carboxylate + pyruvate. It participates in quinol/quinone metabolism; 1,4-dihydroxy-2-naphthoate biosynthesis; 1,4-dihydroxy-2-naphthoate from chorismate: step 3/7. The protein operates within quinol/quinone metabolism; menaquinone biosynthesis. Catalyzes a proton abstraction reaction that results in 2,5-elimination of pyruvate from 2-succinyl-5-enolpyruvyl-6-hydroxy-3-cyclohexene-1-carboxylate (SEPHCHC) and the formation of 2-succinyl-6-hydroxy-2,4-cyclohexadiene-1-carboxylate (SHCHC). This is 2-succinyl-6-hydroxy-2,4-cyclohexadiene-1-carboxylate synthase from Photorhabdus laumondii subsp. laumondii (strain DSM 15139 / CIP 105565 / TT01) (Photorhabdus luminescens subsp. laumondii).